Consider the following 627-residue polypeptide: Membrane protein insertase YidC (627 aa).

The helical transmembrane segment at 8-28 threads the bilayer; the sequence is LFLALILSMGIWMGVNYFFFP. Polar residues predominate over residues 33–57; the sequence is KKNTETKQTQSDKTSENTKQQITSG. The interval 33 to 68 is disordered; that stretch reads KKNTETKQTQSDKTSENTKQQITSGKTKESNSADPV. The span at 58-68 shows a compositional bias: basic and acidic residues; the sequence is KTKESNSADPV. The next 4 membrane-spanning stretches (helical) occupy residues 417 to 437, 488 to 508, 536 to 556, and 575 to 595; these read FTIP…KLVF, VGGC…YTAF, AIPY…LMVG, and MLMY…PSGV.

It belongs to the OXA1/ALB3/YidC family. Type 1 subfamily. In terms of assembly, interacts with the Sec translocase complex via SecD. Specifically interacts with transmembrane segments of nascent integral membrane proteins during membrane integration.

It is found in the cell inner membrane. In terms of biological role, required for the insertion and/or proper folding and/or complex formation of integral membrane proteins into the membrane. Involved in integration of membrane proteins that insert both dependently and independently of the Sec translocase complex, as well as at least some lipoproteins. Aids folding of multispanning membrane proteins. The chain is Membrane protein insertase YidC from Leptospira interrogans serogroup Icterohaemorrhagiae serovar Lai (strain 56601).